A 957-amino-acid polypeptide reads, in one-letter code: Glycine dehydrogenase (decarboxylating) (957 aa).

Lysine 708 is modified (N6-(pyridoxal phosphate)lysine).

This sequence belongs to the GcvP family. In terms of assembly, the glycine cleavage system is composed of four proteins: P, T, L and H. Pyridoxal 5'-phosphate is required as a cofactor.

The catalysed reaction is N(6)-[(R)-lipoyl]-L-lysyl-[glycine-cleavage complex H protein] + glycine + H(+) = N(6)-[(R)-S(8)-aminomethyldihydrolipoyl]-L-lysyl-[glycine-cleavage complex H protein] + CO2. The glycine cleavage system catalyzes the degradation of glycine. The P protein binds the alpha-amino group of glycine through its pyridoxal phosphate cofactor; CO(2) is released and the remaining methylamine moiety is then transferred to the lipoamide cofactor of the H protein. The protein is Glycine dehydrogenase (decarboxylating) of Klebsiella pneumoniae subsp. pneumoniae (strain ATCC 700721 / MGH 78578).